The sequence spans 152 residues: MYPAHLLVLLAVCVSLLGASNIPLPSLDFEQFGKMIQCTIPCEESCLAYMDYGCYCGPGGSGTPLDELDRCRQTHDNCYAEAGKLPACKAMLSEPYNDTYSYGCIERQLTCNDDNDECKAFICNCDRAAVICFSGAPYNDSNYDIGTIEHCK.

Positions Met1–Ala19 are cleaved as a signal peptide. Positions Ser20–Leu27 are excised as a propeptide. Disulfide bonds link Cys38/Cys104, Cys54/Cys151, Cys71/Cys132, Cys78/Cys125, Cys88/Cys118, and Cys111/Cys123. Ca(2+) contacts are provided by Tyr55, Gly57, and Gly59. The active site involves His75. Asp76 provides a ligand contact to Ca(2+). The active site involves Asp126.

This sequence belongs to the phospholipase A2 family. Group I subfamily. D49 sub-subfamily. Ca(2+) is required as a cofactor. This enzyme lacks one of the seven disulfide bonds found in similar PLA2 proteins. In terms of tissue distribution, expressed by the venom gland.

The protein resides in the secreted. It catalyses the reaction a 1,2-diacyl-sn-glycero-3-phosphocholine + H2O = a 1-acyl-sn-glycero-3-phosphocholine + a fatty acid + H(+). In terms of biological role, snake venom phospholipase A2 (PLA2) that inhibits collagen-induced platelet aggregation. PLA2 catalyzes the calcium-dependent hydrolysis of the 2-acyl groups in 3-sn-phosphoglycerides. The sequence is that of Acidic phospholipase A2 S16-19 from Austrelaps superbus (Lowland copperhead snake).